The following is a 272-amino-acid chain: Hydroxyethylthiazole kinase (272 aa).

Methionine 62 is a substrate binding site. Residues arginine 138 and threonine 183 each contribute to the ATP site. A substrate-binding site is contributed by glycine 210.

It belongs to the Thz kinase family. It depends on Mg(2+) as a cofactor.

The catalysed reaction is 5-(2-hydroxyethyl)-4-methylthiazole + ATP = 4-methyl-5-(2-phosphooxyethyl)-thiazole + ADP + H(+). It participates in cofactor biosynthesis; thiamine diphosphate biosynthesis; 4-methyl-5-(2-phosphoethyl)-thiazole from 5-(2-hydroxyethyl)-4-methylthiazole: step 1/1. Functionally, catalyzes the phosphorylation of the hydroxyl group of 4-methyl-5-beta-hydroxyethylthiazole (THZ). In Dichelobacter nodosus (strain VCS1703A), this protein is Hydroxyethylthiazole kinase.